The sequence spans 235 residues: Pyridoxine 5'-phosphate synthase (235 aa).

A 3-amino-2-oxopropyl phosphate-binding site is contributed by Asn6. 1-deoxy-D-xylulose 5-phosphate is bound at residue 8 to 9; it reads DH. Residue Arg17 coordinates 3-amino-2-oxopropyl phosphate. The active-site Proton acceptor is the His42. 1-deoxy-D-xylulose 5-phosphate is bound by residues Arg44 and His49. The active-site Proton acceptor is Glu69. Thr99 lines the 1-deoxy-D-xylulose 5-phosphate pocket. His189 (proton donor) is an active-site residue. Residues Gly190 and 211–212 contribute to the 3-amino-2-oxopropyl phosphate site; that span reads GH.

Belongs to the PNP synthase family. As to quaternary structure, homooctamer; tetramer of dimers.

It is found in the cytoplasm. It carries out the reaction 3-amino-2-oxopropyl phosphate + 1-deoxy-D-xylulose 5-phosphate = pyridoxine 5'-phosphate + phosphate + 2 H2O + H(+). Its pathway is cofactor biosynthesis; pyridoxine 5'-phosphate biosynthesis; pyridoxine 5'-phosphate from D-erythrose 4-phosphate: step 5/5. Functionally, catalyzes the complicated ring closure reaction between the two acyclic compounds 1-deoxy-D-xylulose-5-phosphate (DXP) and 3-amino-2-oxopropyl phosphate (1-amino-acetone-3-phosphate or AAP) to form pyridoxine 5'-phosphate (PNP) and inorganic phosphate. The protein is Pyridoxine 5'-phosphate synthase of Chlorobium phaeovibrioides (strain DSM 265 / 1930) (Prosthecochloris vibrioformis (strain DSM 265)).